The chain runs to 213 residues: Endonuclease III (213 aa).

Residues 101-120 (LEELLKLPGVGRKTANIVLW) form the HhH domain. 4 residues coordinate [4Fe-4S] cluster: Cys-180, Cys-187, Cys-190, and Cys-196.

It belongs to the Nth/MutY family. [4Fe-4S] cluster serves as cofactor.

The enzyme catalyses 2'-deoxyribonucleotide-(2'-deoxyribose 5'-phosphate)-2'-deoxyribonucleotide-DNA = a 3'-end 2'-deoxyribonucleotide-(2,3-dehydro-2,3-deoxyribose 5'-phosphate)-DNA + a 5'-end 5'-phospho-2'-deoxyribonucleoside-DNA + H(+). Its function is as follows. DNA repair enzyme that has both DNA N-glycosylase activity and AP-lyase activity. The DNA N-glycosylase activity releases various damaged pyrimidines from DNA by cleaving the N-glycosidic bond, leaving an AP (apurinic/apyrimidinic) site. The AP-lyase activity cleaves the phosphodiester bond 3' to the AP site by a beta-elimination, leaving a 3'-terminal unsaturated sugar and a product with a terminal 5'-phosphate. This Thermotoga maritima (strain ATCC 43589 / DSM 3109 / JCM 10099 / NBRC 100826 / MSB8) protein is Endonuclease III.